A 505-amino-acid chain; its full sequence is 2,3-bisphosphoglycerate-independent phosphoglycerate mutase (505 aa).

Mn(2+) is bound by residues aspartate 15 and serine 65. The active-site Phosphoserine intermediate is serine 65. Substrate contacts are provided by residues histidine 126, 156-157, arginine 187, arginine 193, 260-263, and lysine 333; these read RD and RPDR. Mn(2+) contacts are provided by aspartate 398, histidine 402, aspartate 439, histidine 440, and histidine 457.

Belongs to the BPG-independent phosphoglycerate mutase family. As to quaternary structure, monomer. Requires Mn(2+) as cofactor.

The enzyme catalyses (2R)-2-phosphoglycerate = (2R)-3-phosphoglycerate. Its pathway is carbohydrate degradation; glycolysis; pyruvate from D-glyceraldehyde 3-phosphate: step 3/5. Functionally, catalyzes the interconversion of 2-phosphoglycerate and 3-phosphoglycerate. This is 2,3-bisphosphoglycerate-independent phosphoglycerate mutase from Mycoplasmopsis pulmonis (strain UAB CTIP) (Mycoplasma pulmonis).